Reading from the N-terminus, the 457-residue chain is Argininosuccinate lyase (457 aa).

Belongs to the lyase 1 family. Argininosuccinate lyase subfamily.

The protein localises to the cytoplasm. The enzyme catalyses 2-(N(omega)-L-arginino)succinate = fumarate + L-arginine. The protein operates within amino-acid biosynthesis; L-arginine biosynthesis; L-arginine from L-ornithine and carbamoyl phosphate: step 3/3. The polypeptide is Argininosuccinate lyase (Escherichia coli O139:H28 (strain E24377A / ETEC)).